Consider the following 148-residue polypeptide: L-alanine exporter AlaE (148 aa).

Transmembrane regions (helical) follow at residues 18-38, 49-69, 88-108, and 115-135; these read FALV…ISGM, VSIP…DAFI, LLAY…SVGA, and TAVA…GYFL.

Belongs to the AlaE exporter family.

It localises to the cell inner membrane. Exports L-alanine. The protein is L-alanine exporter AlaE of Yersinia enterocolitica subsp. palearctica serotype O:3 (strain DSM 13030 / CIP 106945 / Y11).